The following is a 1789-amino-acid chain: Genome polyprotein (1789 aa).

A disordered region spans residues 1-25 (MMMASKDVVPTAASSENANNNSSIK). The segment at 1 to 183 (MMMASKDVVP…MCPLPPVDQR (183 aa)) is interaction with host MAP1LC3A/LC3. Positions 12–23 (AASSENANNNSS) are enriched in low complexity. The tract at residues 184–398 (STTPATEPTI…ASLLPDFHLQ (215 aa)) is interaction with NTPase. The interval 301–398 (HPTQDWSRDT…ASLLPDFHLQ (98 aa)) is interaction with NS4. 2 host ER membrane association regions span residues 318–349 (KLEM…KPLN) and 360–398 (TFMG…FHLQ). The tract at residues 399-574 (GPEDLARDLV…GKTKAAEHLA (176 aa)) is interaction with NS1-2 and NS4 and homooligomerization. In terms of domain architecture, SF3 helicase spans 532–697 (RISMARAALA…EHTRKVSPGD (166 aa)). Residue 560–567 (GPPGIGKT) participates in ATP binding. The tract at residues 651–756 (AIVITTNAPG…AVALTMERQD (106 aa)) is important for mitochondrion targeting. The interval 826-832 (YIIESDG) is functions as endoplasmic reticulum export signal. Residues 865 to 910 (RAVAYASCFQSAITTILQMAGSALVINRAVKRMFGTRTAAMALEGP) are host membrane association. The disordered stretch occupies residues 958–981 (DAVPEGKNKGKTKKGRGRKNNYNA). The span at 966-976 (KGKTKKGRGRK) shows a compositional bias: basic residues. Residues 989 to 994 (DEEYEE) form an acidic region. O-(5'-phospho-RNA)-tyrosine is present on Y992. The interaction with host EIF4G stretch occupies residues 1084 to 1100 (WADDDREVDYNEKINFE). The Peptidase C37 domain occupies 1101–1281 (APPTLWSRVT…QAGEGETALE (181 aa)). Residues H1130, E1154, and C1239 each act as for 3CLpro activity in the active site. The 122-residue stretch at 1516 to 1637 (KNHFDADYTA…STDIDFDPAR (122 aa)) folds into the RdRp catalytic domain. Residues D1520, D1522, D1624, and E1625 each coordinate Mg(2+).

As to quaternary structure, homodimer. Homooligomer. Interacts with NTPase; this interaction increases the proapoptotic activity of the NTPase and is crucial for the formation of the viral replication complex. Interacts with NS4; this interaction is crucial for the formation of the viral replication complex. Interacts (via N-terminus) with host VAPA. Interacts with host MAP1LC3A/LC3; this interaction does not seem to be linked to host autophagy, but rather plays a role in the formation of viral factories. In terms of assembly, homooligomer. Interacts with NS1-2; this interaction increases the proapoptotic activity of the NTPase and is crucial for the formation of the viral replication complex. Interacts with NS4; this interaction increases the proapoptotic activity of the NTPase. Homodimer. Monomer; in solution. As to quaternary structure, interacts with NTPase; this interaction increases the proapoptotic activity of the NTPase. Interacts with NS1-2; this interaction is crucial for the formation of the viral replication complex. In terms of assembly, monomer. Interacts with the RNA-directed RNA polymerase; this interaction induces the multimerization of the RdRp and enhances its activity. Interacts with host IEF4G1; this interaction plays a role in translation of viral proteins. Homohexamer; also forms fibrous hexameric oligomer. Interacts with the viral genome-linked protein; this interaction induces the multimerization of the RdRp and enhances its activity. Mg(2+) serves as cofactor. It depends on Mn(2+) as a cofactor. Specific enzymatic cleavages in vivo yield mature proteins. 3CLpro is first autocatalytically cleaved, then processes the whole polyprotein. NS1/2-3 and NS3-4 sites are cleaved rapidly and NS4-5, NS5-6, and NS6-7 sites are processed subsequently and less efficiently. In terms of processing, VPg is uridylylated by the polymerase and is covalently attached to the 5'-end of the polyadenylated genomic and subgenomic RNAs. This uridylylated form acts as a nucleotide-peptide primer for the polymerase. Post-translationally, cleaved by host CASP3/caspase 3 at 18-22 h.p.i. The cleavage allows NS1 secretion, which is essential for intestinal infection and resistance to IFN-lambda.

It localises to the host Golgi apparatus membrane. Its subcellular location is the secreted. The protein resides in the host endoplasmic reticulum membrane. The protein localises to the host cytoplasm. It is found in the host perinuclear region. The catalysed reaction is a ribonucleoside 5'-triphosphate + H2O = a ribonucleoside 5'-diphosphate + phosphate + H(+). The enzyme catalyses Endopeptidase with a preference for cleavage when the P1 position is occupied by Glu-|-Xaa and the P1' position is occupied by Gly-|-Yaa.. It carries out the reaction RNA(n) + a ribonucleoside 5'-triphosphate = RNA(n+1) + diphosphate. With respect to regulation, inhibited by the chemical compound K36/GC376, which covalently binds to the nucleophilic cysteine residue. Inhibited by various macrocyclic inhibitors. Its activity is regulated as follows. Inhibited by the guanidine salt GuHCl. Functionally, induces the proliferation of the host smooth ER membranes forming long tubular structures. These remodeled membranes probably form the viral factories that contain the replication complex. Induces the disassembly of host Golgi. May play a role in viral replication by interacting with host VAPA, a vesicle-associated membrane protein that plays a role in SNARE-mediated vesicle fusion. This interaction may target replication complex to intracellular membranes. Displays NTPase activity and RNA helix-unwinding activity. Displays RNA chaperone-like activity and destabilizes dsRNA. Induces the formation of convoluted membranes derived from the host ER. These remodeled membranes probably form the viral factories that contain the replication complex. Initiates host cell death by targeting the mitochondrial outer membrane, leading to the permeabilization of mitochondria, programmed host cell death and viral egress. Probably plays a role in preventing the assembly of host stress granules. Its function is as follows. Probable key protein responsible for the formation of membrane alterations by the virus. Induces the formation of convoluted membranes derived from the host ER. These remodeled membranes probably form the viral factories that contain the replication complex. May play a role in targeting replication complex to intracellular membranes. Induces the disassembly of host Golgi and antagonism of Golgi-dependent cellular protein secretion, probably via the mislocalization of COPII-coated vesicles. In terms of biological role, viral genome-linked protein is covalently linked to the 5'-end of the positive-strand, negative-strand genomic RNAs and subgenomic RNA. Acts as a genome-linked replication primer. May recruit ribosome to viral RNA thereby promoting viral proteins translation. Interacts with host translation initiation complex to allow the translation of viral proteins. Induces the formation of aggregates of RNA-directed RNA polymerase in the presence of RNA. Through its interaction with the viral RNA-directed RNA polymerase, plays a crucial role in enhancing the polymerase activity. Functionally, processes the polyprotein. 3CLpro-RdRp is first released by autocleavage, then all other proteins are cleaved. May cleave host polyadenylate-binding protein thereby inhibiting cellular translation. Replicates genomic and antigenomic RNA by recognizing replications specific signals. Also transcribes a subgenomic mRNA by initiating RNA synthesis internally on antigenomic RNA. This sgRNA codes for structural proteins. Catalyzes the covalent attachment VPg with viral RNAs. This Norovirus (strain Human/NoV/United States/Norwalk/1968/GI) (Hu/NV/NV/1968/US) protein is Genome polyprotein.